Reading from the N-terminus, the 470-residue chain is Uronate isomerase (470 aa).

Belongs to the metallo-dependent hydrolases superfamily. Uronate isomerase family.

The enzyme catalyses D-glucuronate = D-fructuronate. The catalysed reaction is aldehydo-D-galacturonate = keto-D-tagaturonate. It participates in carbohydrate metabolism; pentose and glucuronate interconversion. The sequence is that of Uronate isomerase from Vibrio parahaemolyticus serotype O3:K6 (strain RIMD 2210633).